Reading from the N-terminus, the 246-residue chain is MAHILMKQLLEAGVHFGHQTKRWCPKMKEYIFSERNGIHIIDLQKTLVKLEEAYEFAKEQAKEGKTFLFVGTKKQAQQTIEEEAKRCGAFYVNQRWLGGMLTNFTTIKSRIDYMIKLEELKNNGYFDKLPKKQANRLNRELEKLIKVFDGLRGIERIPDVLYIVDPKREEIAVKEANKLGIPIIAIVDTNCDPELITYPIPGNDDAIRSIKLITSKIADAILEGRDLREKEADLQLKDEDLQSEIS.

This sequence belongs to the universal ribosomal protein uS2 family.

The polypeptide is Small ribosomal subunit protein uS2 (Dictyoglomus turgidum (strain DSM 6724 / Z-1310)).